Consider the following 437-residue polypeptide: Doublesex- and mab-3-related transcription factor A2 (437 aa).

The DM DNA-binding region spans 49 to 96 (CARCRNHGVVSALKGHKRYCRWKDCMCAKCTLIAERQRVMAAQVALRR). Positions 160–253 (IPRSMTPQLP…DPSSSSLARQ (94 aa)) are disordered. Low complexity-rich tracts occupy residues 179–201 (SEPVSGSAPGASSPEAQPGSGSE) and 223–235 (SPSLISPLSSESG). One can recognise a DMA domain in the interval 254-289 (RTPINILTRVFPAQKRSVLELVLQGCGGDVVQAIEQ).

Belongs to the DMRT family.

It localises to the nucleus. Its function is as follows. May be involved in sexual development. In Xenopus laevis (African clawed frog), this protein is Doublesex- and mab-3-related transcription factor A2 (dmrta2).